The chain runs to 256 residues: Ribosomal RNA small subunit methyltransferase A (256 aa).

Positions 12, 14, 39, 60, 85, and 103 each coordinate S-adenosyl-L-methionine.

It belongs to the class I-like SAM-binding methyltransferase superfamily. rRNA adenine N(6)-methyltransferase family. RsmA subfamily.

It is found in the cytoplasm. It catalyses the reaction adenosine(1518)/adenosine(1519) in 16S rRNA + 4 S-adenosyl-L-methionine = N(6)-dimethyladenosine(1518)/N(6)-dimethyladenosine(1519) in 16S rRNA + 4 S-adenosyl-L-homocysteine + 4 H(+). Functionally, specifically dimethylates two adjacent adenosines (A1518 and A1519) in the loop of a conserved hairpin near the 3'-end of 16S rRNA in the 30S particle. May play a critical role in biogenesis of 30S subunits. This is Ribosomal RNA small subunit methyltransferase A from Legionella pneumophila (strain Corby).